The primary structure comprises 481 residues: Beta-1,3-glucan-binding protein (481 aa).

The signal sequence occupies residues 1–18; that stretch reads RCARVCAVLFLFIQISYG. Residues 20–120 enclose the CBM39 domain; sequence YQVPQVTVQA…LSFTVSALED (101 aa). Asparagine 110 is a glycosylation site (N-linked (GlcNAc...) asparagine). Positions 124–481 constitute a GH16 domain; that stretch reads TGTGTDPVPT…LVDYVKVVAL (358 aa).

This sequence belongs to the insect beta-1,3-glucan binding protein family.

Its subcellular location is the secreted. Involved in the recognition of invading microorganisms. Binds specifically to beta-1,3-glucan and activates the phenoloxidase cascade. This chain is Beta-1,3-glucan-binding protein, found in Hyphantria cunea (Fall webworm moth).